A 116-amino-acid polypeptide reads, in one-letter code: uncharacterized protein (116 aa).

A helical transmembrane segment spans residues 52–72 (VFCSANSVPLYLLLLTSALHF).

It localises to the mitochondrion membrane. This is an uncharacterized protein from Arabidopsis thaliana (Mouse-ear cress).